The primary structure comprises 173 residues: Large ribosomal subunit protein uL10 (173 aa).

Belongs to the universal ribosomal protein uL10 family. Part of the ribosomal stalk of the 50S ribosomal subunit. The N-terminus interacts with L11 and the large rRNA to form the base of the stalk. The C-terminus forms an elongated spine to which L12 dimers bind in a sequential fashion forming a multimeric L10(L12)X complex.

Forms part of the ribosomal stalk, playing a central role in the interaction of the ribosome with GTP-bound translation factors. The chain is Large ribosomal subunit protein uL10 from Chlorobaculum tepidum (strain ATCC 49652 / DSM 12025 / NBRC 103806 / TLS) (Chlorobium tepidum).